We begin with the raw amino-acid sequence, 313 residues long: Dihydroorotate dehydrogenase B (NAD(+)), catalytic subunit (313 aa).

FMN is bound by residues serine 21 and 45–46 (KA). Substrate-binding positions include lysine 45 and 69–73 (NAIGL). Positions 99 and 127 each coordinate FMN. Asparagine 127 contributes to the substrate binding site. Residue cysteine 130 is the Nucleophile of the active site. 2 residues coordinate FMN: lysine 165 and isoleucine 191. 192–193 (NT) serves as a coordination point for substrate. FMN is bound by residues glycine 217, 243–244 (GG), and 265–266 (GT).

The protein belongs to the dihydroorotate dehydrogenase family. Type 1 subfamily. Heterotetramer of 2 PyrK and 2 PyrD type B subunits. It depends on FMN as a cofactor.

The protein localises to the cytoplasm. It catalyses the reaction (S)-dihydroorotate + NAD(+) = orotate + NADH + H(+). It functions in the pathway pyrimidine metabolism; UMP biosynthesis via de novo pathway; orotate from (S)-dihydroorotate (NAD(+) route): step 1/1. Functionally, catalyzes the conversion of dihydroorotate to orotate with NAD(+) as electron acceptor. The polypeptide is Dihydroorotate dehydrogenase B (NAD(+)), catalytic subunit (pyrD) (Geobacillus sp. (strain WCH70)).